A 71-amino-acid chain; its full sequence is UPF0346 protein SMU_1621c (71 aa).

Belongs to the UPF0346 family.

In Streptococcus mutans serotype c (strain ATCC 700610 / UA159), this protein is UPF0346 protein SMU_1621c.